The following is a 794-amino-acid chain: Protein transport protein SEC23 G (794 aa).

The Zn(2+) site is built by cysteine 56, cysteine 59, cysteine 78, and cysteine 81. The zinc finger-like stretch occupies residues 56–81; it reads CSRCGAVLNPYARVDYQSRIWSCPFC.

This sequence belongs to the SEC23/SEC24 family. SEC23 subfamily. Component of the coat protein complex II (COPII), composed of at least five proteins: the Sec23/24 complex, the Sec13/31 complex and Sar1. Interacts with SEC24A.

Its subcellular location is the cytoplasmic vesicle. It localises to the COPII-coated vesicle membrane. The protein resides in the endoplasmic reticulum membrane. It is found in the membrane. Its function is as follows. Component of the coat protein complex II (COPII) which promotes the formation of transport vesicles from the endoplasmic reticulum (ER). The coat has two main functions, the physical deformation of the endoplasmic reticulum membrane into vesicles and the selection of cargo molecules. The sequence is that of Protein transport protein SEC23 G from Arabidopsis thaliana (Mouse-ear cress).